The primary structure comprises 590 residues: DNA primase (590 aa).

The CHC2-type zinc-finger motif lies at 37–61; the sequence is CPFHKEKTPSFSVSPTKQFYHCFSC. The region spanning 255–337 is the Toprim domain; the sequence is GRILVVEGYM…DKSLHFLFLP (83 aa). Positions 261, 305, and 307 each coordinate Mg(2+).

This sequence belongs to the DnaG primase family. As to quaternary structure, monomer. Interacts with DnaB. The cofactor is Zn(2+). Mg(2+) is required as a cofactor.

The enzyme catalyses ssDNA + n NTP = ssDNA/pppN(pN)n-1 hybrid + (n-1) diphosphate.. Its function is as follows. RNA polymerase that catalyzes the synthesis of short RNA molecules used as primers for DNA polymerase during DNA replication. The protein is DNA primase of Neisseria meningitidis serogroup B (strain ATCC BAA-335 / MC58).